The chain runs to 969 residues: RNA polymerase-associated protein RapA (969 aa).

The Helicase ATP-binding domain occupies 162 to 339; it reads EVGQRVAPRV…FARLALLDAD (178 aa). 175 to 182 provides a ligand contact to ATP; that stretch reads DEVGLGKT. Positions 285-288 match the DEAH box motif; it reads DEAH. The Helicase C-terminal domain occupies 492 to 663; sequence RIEWLITFLK…IFLKNPQAVG (172 aa).

It belongs to the SNF2/RAD54 helicase family. RapA subfamily. As to quaternary structure, interacts with the RNAP. Has a higher affinity for the core RNAP than for the holoenzyme. Its ATPase activity is stimulated by binding to RNAP.

Functionally, transcription regulator that activates transcription by stimulating RNA polymerase (RNAP) recycling in case of stress conditions such as supercoiled DNA or high salt concentrations. Probably acts by releasing the RNAP, when it is trapped or immobilized on tightly supercoiled DNA. Does not activate transcription on linear DNA. Probably not involved in DNA repair. The sequence is that of RNA polymerase-associated protein RapA from Actinobacillus pleuropneumoniae serotype 3 (strain JL03).